The sequence spans 106 residues: Integration host factor subunit alpha (106 aa).

Belongs to the bacterial histone-like protein family. In terms of assembly, heterodimer of an alpha and a beta chain.

This protein is one of the two subunits of integration host factor, a specific DNA-binding protein that functions in genetic recombination as well as in transcriptional and translational control. This is Integration host factor subunit alpha from Nitrobacter winogradskyi (strain ATCC 25391 / DSM 10237 / CIP 104748 / NCIMB 11846 / Nb-255).